Reading from the N-terminus, the 1768-residue chain is Callose synthase 11 (1768 aa).

Residues 1–308 are Cytoplasmic-facing; it reads MRRQRPSVAT…WNVYRSFDRL (308 aa). Residues 309 to 329 form a helical membrane-spanning segment; sequence WILLLLYLQAAIIVATSDVKF. Over 330–335 the chain is Extracellular; the sequence is PWQDRD. A helical membrane pass occupies residues 336–356; it reads VEVALLTVFISWAGLRLLQSV. Residues 357–370 are Cytoplasmic-facing; that stretch reads LDASTQYSLVSRET. A helical membrane pass occupies residues 371–391; the sequence is YWLFIRLTLKFVVAVAWTVLF. The Extracellular portion of the chain corresponds to 392–421; the sequence is SVFYARIWSQKNKDGVWSRAANERVVTFLK. Residues 422–442 traverse the membrane as a helical segment; the sequence is VVFVYVIPELLALVLFIVPCI. Residues 443-480 lie on the Cytoplasmic side of the membrane; the sequence is RNWVEELNLGVVYFLTWWFYSKTFVGRGMREGLVDNVK. Residues 481-501 form a helical membrane-spanning segment; that stretch reads YTLFWIIVLATKFIFSYFLQI. The Extracellular portion of the chain corresponds to 502 to 530; the sequence is RPLIAPTRALLNLKDATYNWHEFFGSTHR. Residues 531–551 traverse the membrane as a helical segment; the sequence is IAVGMLWLPVILVYLMDLQIW. Topologically, residues 552 to 1341 are cytoplasmic; sequence YSIYSSLVGA…FFRMLSFFYT (790 aa). A helical membrane pass occupies residues 1342–1362; the sequence is TVGYYFNTMLIVFTVYAFLWG. At 1363–1386 the chain is on the extracellular side; the sequence is RLYLALSGVEKIAKDRSSSNEALG. A helical transmembrane segment spans residues 1387–1407; it reads AILNQQFIIQLGLFTALPMIL. The Cytoplasmic segment spans residues 1408 to 1413; the sequence is ENSLER. A helical transmembrane segment spans residues 1414 to 1434; it reads GFLPAVWDFITMQLQLASFFY. The Extracellular portion of the chain corresponds to 1435–1481; it reads TFSMGTRTHYFGRTILHGGAKYRATGRGFVVEHKKFAENYRLYARTH. A helical membrane pass occupies residues 1482-1502; it reads FIKAIELAIILLVYAAYSPLA. At 1503-1508 the chain is on the cytoplasmic side; it reads KSSFVY. Residues 1509 to 1529 traverse the membrane as a helical segment; the sequence is ILMTISSWFLITSWIISPFLF. Residues 1530 to 1583 are Extracellular-facing; the sequence is NPSGFDWLKTVNDFDDFIAWLWSRGGLFTKADQSWFTWWNEEQEHLKTTGVWGK. Residues 1584–1604 traverse the membrane as a helical segment; that stretch reads LLEIILDLRFFFFQYSIVYHL. Topologically, residues 1605-1612 are cytoplasmic; it reads RIAENRTS. Residues 1613 to 1633 traverse the membrane as a helical segment; that stretch reads IGVYLISWGCIIGIVAIYITT. The Extracellular segment spans residues 1634–1649; the sequence is IYAQKRYSVKEHIKYR. A helical membrane pass occupies residues 1650–1670; sequence FIQFLVILLTVLVVVMMLQFT. Residues 1671-1673 are Cytoplasmic-facing; it reads KLT. The chain crosses the membrane as a helical span at residues 1674 to 1694; sequence VVDLLISLLAFVPTGWGLISI. Over 1695 to 1719 the chain is Extracellular; sequence AQVLKPFLLSTVVWDTVISVARFYD. A helical membrane pass occupies residues 1720 to 1740; it reads LFFGLIVMAPVALLSWLPGFQ. Residues 1741-1768 lie on the Cytoplasmic side of the membrane; the sequence is NMQTRILFNEAFSRGLQISIILAGKKST.

It belongs to the glycosyltransferase 48 family. Ubiquitous.

It is found in the cell membrane. The enzyme catalyses [(1-&gt;3)-beta-D-glucosyl](n) + UDP-alpha-D-glucose = [(1-&gt;3)-beta-D-glucosyl](n+1) + UDP + H(+). In terms of biological role, required the formation of the callose wall separating the tetraspores (interstitial wall), but not for the callose wall surrounding the pollen mother cells (peripheral wall). Functionally redudant to CALS12 (GSL5). During plant growth and development, callose is found as a transitory component of the cell plate in dividing cells, is a major component of pollen mother cell walls and pollen tubes, and is found as a structural component of plasmodesmatal canals. In Arabidopsis thaliana (Mouse-ear cress), this protein is Callose synthase 11 (CALS11).